The sequence spans 597 residues: MNKAFIVVAVVLLILGIISFNLVFIILAIISLFFVDPQIMRKFYKFFLKSNISKIFVKNYKTNHSIVIEDGYLKIEDNVKAFLIVDDIPFDYRDLSDESLRVKISSFHKVLDIAGQIDIVFRKSSIDKNKFLSDLFQKAQNIRVIIDADPSNERAKNELMMIQHMIKKISEGEMPFKYLIFFIINSDSKEKALATADVVKKGLESIGVKSRLAYKHEIEDLLNDKLSLKKIVFPSQIPFLSVFSLQKQPDYEIITDGIYLGQEINDRRAVFWNVNRVINPHALIIGPTGSGKTEFLLSLGVKTNILYGIPIVFFDVKKDISLRLKKYGYKYKYINPLLNSINLLKFSNVNKDIYLIQLENIIRNSFKLDRFVSALLYRILLESISDNYYEVSWDYIIDKIEKYDINEDVKAYLLRIVSAIKSLDAGVEDIDLISAISEGINVVDLSSIKSEELRRLVMYGIIIKFINKYNIADDRLKLVLVIDEAWTLLRSEDRDYQIVADLIKRGRGFGIGIFMATQNFDDLGELSDIFLENIGLLGFMNNGDKKFWNEVMRFADLNIEETLRSLIFLGKGEMLIRFINDPRPIMIKTDVLVRNSF.

The chain crosses the membrane as a helical span at residues Val-10–Ile-30. Gly-286 to Thr-293 is an ATP binding site.

Its subcellular location is the cell membrane. In terms of biological role, part of the Ced system, which is involved in DNA import. The sequence is that of DNA import protein CedB from Sulfolobus acidocaldarius (strain ATCC 33909 / DSM 639 / JCM 8929 / NBRC 15157 / NCIMB 11770).